Consider the following 421-residue polypeptide: uncharacterized protein (421 aa).

K249 carries the N6-(pyridoxal phosphate)lysine modification.

It belongs to the class-I pyridoxal-phosphate-dependent aminotransferase family. Pyridoxal 5'-phosphate is required as a cofactor.

It is found in the cytoplasm. This is an uncharacterized protein from Schizosaccharomyces pombe (strain 972 / ATCC 24843) (Fission yeast).